Consider the following 143-residue polypeptide: ATP synthase subunit b', chloroplastic (143 aa).

The helical transmembrane segment at 12–31 (LPVMGLQVVLLSWLLEQILY) threads the bilayer.

It belongs to the ATPase B chain family. As to quaternary structure, F-type ATPases have 2 components, F(1) - the catalytic core - and F(0) - the membrane proton channel. F(1) has five subunits: alpha(3), beta(3), gamma(1), delta(1), epsilon(1). F(0) has four main subunits: a(1), b(1), b'(1) and c(10-14). The alpha and beta chains form an alternating ring which encloses part of the gamma chain. F(1) is attached to F(0) by a central stalk formed by the gamma and epsilon chains, while a peripheral stalk is formed by the delta, b and b' chains.

It localises to the plastid. It is found in the chloroplast thylakoid membrane. Its function is as follows. F(1)F(0) ATP synthase produces ATP from ADP in the presence of a proton or sodium gradient. F-type ATPases consist of two structural domains, F(1) containing the extramembraneous catalytic core and F(0) containing the membrane proton channel, linked together by a central stalk and a peripheral stalk. During catalysis, ATP synthesis in the catalytic domain of F(1) is coupled via a rotary mechanism of the central stalk subunits to proton translocation. Functionally, component of the F(0) channel, it forms part of the peripheral stalk, linking F(1) to F(0). The b'-subunit is a diverged and duplicated form of b found in plants and photosynthetic bacteria. This Cyanidioschyzon merolae (strain NIES-3377 / 10D) (Unicellular red alga) protein is ATP synthase subunit b', chloroplastic.